A 440-amino-acid chain; its full sequence is Cell division protein DivIB (440 aa).

The segment covering 1–10 (MMDDKTKNDQ) has biased composition (basic and acidic residues). Disordered stretches follow at residues 1 to 97 (MMDD…DSNI) and 123 to 154 (QHQS…TQLK). Residues 1-174 (MMDDKTKNDQ…RRKRQKRIQY (174 aa)) lie on the Cytoplasmic side of the membrane. Over residues 12-21 (ESNEDKDELE) the composition is skewed to acidic residues. Residues 27-39 (TSKKRRQRKRSKA) are compositionally biased toward basic residues. The span at 78–87 (DSASSHANDN) shows a compositional bias: low complexity. Residues 88–97 (NIDDSTDSNI) show a composition bias toward acidic residues. Polar residues predominate over residues 124–134 (HQSAPNEQNSD). A helical membrane pass occupies residues 175 to 195 (SVITILVLLIAVILIYMFSPL). Positions 196–264 (SKIAHVNING…NTLNVDITEN (69 aa)) constitute a POTRA domain. At 196–440 (SKIAHVNING…KINKQSSKNN (245 aa)) the chain is on the extracellular side. The interval 397–440 (YRGNTSTQSESDKNVTKSSQEENQAKEELQSVLNKINKQSSKNN) is disordered. Basic and acidic residues predominate over residues 406–425 (ESDKNVTKSSQEENQAKEEL). Residues 427–440 (SVLNKINKQSSKNN) are compositionally biased toward polar residues.

Belongs to the FtsQ/DivIB family. DivIB subfamily.

The protein localises to the cell membrane. In terms of biological role, cell division protein that may be involved in stabilizing or promoting the assembly of the division complex. In Staphylococcus aureus (strain MRSA252), this protein is Cell division protein DivIB.